Consider the following 122-residue polypeptide: Large ribosomal subunit protein uL14c (122 aa).

This sequence belongs to the universal ribosomal protein uL14 family. As to quaternary structure, part of the 50S ribosomal subunit.

Its subcellular location is the plastid. It is found in the chloroplast. Its function is as follows. Binds to 23S rRNA. The polypeptide is Large ribosomal subunit protein uL14c (Angiopteris evecta (Mule's foot fern)).